Consider the following 484-residue polypeptide: Protein nucleotidyltransferase YdiU (484 aa).

8 residues coordinate ATP: G87, G89, R90, K110, D122, G123, R173, and R180. D249 functions as the Proton acceptor in the catalytic mechanism. Mg(2+) contacts are provided by N250 and D259. D259 serves as a coordination point for ATP.

Belongs to the SELO family. Mg(2+) serves as cofactor. The cofactor is Mn(2+).

The enzyme catalyses L-seryl-[protein] + ATP = 3-O-(5'-adenylyl)-L-seryl-[protein] + diphosphate. It carries out the reaction L-threonyl-[protein] + ATP = 3-O-(5'-adenylyl)-L-threonyl-[protein] + diphosphate. The catalysed reaction is L-tyrosyl-[protein] + ATP = O-(5'-adenylyl)-L-tyrosyl-[protein] + diphosphate. It catalyses the reaction L-histidyl-[protein] + UTP = N(tele)-(5'-uridylyl)-L-histidyl-[protein] + diphosphate. The enzyme catalyses L-seryl-[protein] + UTP = O-(5'-uridylyl)-L-seryl-[protein] + diphosphate. It carries out the reaction L-tyrosyl-[protein] + UTP = O-(5'-uridylyl)-L-tyrosyl-[protein] + diphosphate. In terms of biological role, nucleotidyltransferase involved in the post-translational modification of proteins. It can catalyze the addition of adenosine monophosphate (AMP) or uridine monophosphate (UMP) to a protein, resulting in modifications known as AMPylation and UMPylation. This is Protein nucleotidyltransferase YdiU from Lachnoclostridium phytofermentans (strain ATCC 700394 / DSM 18823 / ISDg) (Clostridium phytofermentans).